The primary structure comprises 302 residues: Sulfate adenylyltransferase subunit 2 (302 aa).

This sequence belongs to the PAPS reductase family. CysD subfamily. Heterodimer composed of CysD, the smaller subunit, and CysN.

The enzyme catalyses sulfate + ATP + H(+) = adenosine 5'-phosphosulfate + diphosphate. It participates in sulfur metabolism; hydrogen sulfide biosynthesis; sulfite from sulfate: step 1/3. Its function is as follows. With CysN forms the ATP sulfurylase (ATPS) that catalyzes the adenylation of sulfate producing adenosine 5'-phosphosulfate (APS) and diphosphate, the first enzymatic step in sulfur assimilation pathway. APS synthesis involves the formation of a high-energy phosphoric-sulfuric acid anhydride bond driven by GTP hydrolysis by CysN coupled to ATP hydrolysis by CysD. The polypeptide is Sulfate adenylyltransferase subunit 2 (Buchnera aphidicola subsp. Acyrthosiphon pisum (strain 5A)).